The chain runs to 649 residues: Acetyl-coenzyme A synthetase (649 aa).

CoA contacts are provided by residues 189–192, Thr-311, and Asn-335; that span reads RGGK. ATP-binding positions include 387–389, 411–416, Asp-500, and Arg-515; these read GEP and DTWWQT. Residue Ser-523 coordinates CoA. Arg-526 contacts ATP. The Mg(2+) site is built by Val-537, His-539, and Val-542. Arg-584 serves as a coordination point for CoA. Lys-609 carries the post-translational modification N6-acetyllysine.

This sequence belongs to the ATP-dependent AMP-binding enzyme family. Mg(2+) serves as cofactor. In terms of processing, acetylated. Deacetylation by the SIR2-homolog deacetylase activates the enzyme.

It carries out the reaction acetate + ATP + CoA = acetyl-CoA + AMP + diphosphate. Its function is as follows. Catalyzes the conversion of acetate into acetyl-CoA (AcCoA), an essential intermediate at the junction of anabolic and catabolic pathways. AcsA undergoes a two-step reaction. In the first half reaction, AcsA combines acetate with ATP to form acetyl-adenylate (AcAMP) intermediate. In the second half reaction, it can then transfer the acetyl group from AcAMP to the sulfhydryl group of CoA, forming the product AcCoA. In Rhizobium meliloti (strain 1021) (Ensifer meliloti), this protein is Acetyl-coenzyme A synthetase.